Here is a 288-residue protein sequence, read N- to C-terminus: Shikimate kinase (288 aa).

81–91 lines the ATP pocket; sequence PVASGLKSSSA.

Belongs to the GHMP kinase family. Archaeal shikimate kinase subfamily.

It is found in the cytoplasm. It catalyses the reaction shikimate + ATP = 3-phosphoshikimate + ADP + H(+). It participates in metabolic intermediate biosynthesis; chorismate biosynthesis; chorismate from D-erythrose 4-phosphate and phosphoenolpyruvate: step 5/7. The polypeptide is Shikimate kinase (Methanothrix thermoacetophila (strain DSM 6194 / JCM 14653 / NBRC 101360 / PT) (Methanosaeta thermophila)).